Here is a 1009-residue protein sequence, read N- to C-terminus: Cilia- and flagella-associated protein 70 (1009 aa).

A compositionally biased stretch (basic and acidic residues) spans 410-428 (NLKEDKPVKEKDIDGRPRP). The segment at 410–457 (NLKEDKPVKEKDIDGRPRPGDVQAPSIKSQSSDTPLEGEPPLSHNPEG) is disordered. TPR repeat units follow at residues 498–531 (PPLTRRTGGAQKAVSDYHTQIKNISRAILDEYYR), 635–668 (SEQLRLFAFEAEVNENFEMAAAYYKERLVREPQN), 669–702 (LDHWLDYGVFCLLTEDNIKAQECFRKALSLNQSH), 704–736 (HSLLLCGVLAVLLENYEQAEIFFEDATCLEPTN), 888–921 (HFIFLRLGLIYLEEKEYEKAKKTYMQACKRSPSC), 923–954 (TWLGLGIACYRLEELTEAEDALSEANALNNYN), and 956–988 (EVWAYLALVCLKVGRQLEAEQAYKYMIKLKLKD).

Belongs to the CFAP70 family.

It is found in the cell projection. The protein resides in the cilium. Its subcellular location is the flagellum. It localises to the cytoplasm. The protein localises to the cytoskeleton. It is found in the flagellum basal body. The protein resides in the cilium axoneme. Axoneme-binding protein that plays a role in the regulation of ciliary motility and cilium length. This is Cilia- and flagella-associated protein 70 from Macaca fascicularis (Crab-eating macaque).